The chain runs to 163 residues: Nucleotide-binding protein Asuc_2113 (163 aa).

The protein belongs to the YajQ family.

Its function is as follows. Nucleotide-binding protein. This chain is Nucleotide-binding protein Asuc_2113, found in Actinobacillus succinogenes (strain ATCC 55618 / DSM 22257 / CCUG 43843 / 130Z).